The primary structure comprises 545 residues: Metal transporter NRAT1 (545 aa).

The next 12 membrane-spanning stretches (helical) occupy residues 51–71, 84–104, 128–148, 155–175, 188–208, 234–254, 278–298, 333–353, 373–395, 398–418, 437–457, and 474–494; these read FLAH…PSNL, ELLW…TLAA, IFLW…EVLG, ILLK…TLLL, FIIA…LSYL, IALF…ALVL, LAFI…GSIC, VVYA…CTFA, LITR…PSGA, LIIL…IPLL, VVIA…FLVW, and GLIS…VVYL. Residues 516 to 545 are disordered; the sequence is EAGGTPVVDASAADEDQPAPYRKDLADASM. Residues 536–545 are compositionally biased toward basic and acidic residues; it reads YRKDLADASM.

Belongs to the NRAMP (TC 2.A.55) family. In terms of tissue distribution, expressed at low levels in roots.

The protein localises to the cell membrane. Metal transporter that transports the trivalent cation aluminum (Al(3+)), but does not seem to transport divalent cations such as iron (Fe(2+)), manganese (Mg(2+)) or Cadmium (Cd(2+)). Involved in Al tolerance by taking up Al in root cells, where it is detoxified by chelation with organic acid anions and sequestration into the vacuoles. The chain is Metal transporter NRAT1 (NRAT1) from Oryza sativa subsp. japonica (Rice).